The chain runs to 913 residues: Polyribonucleotide nucleotidyltransferase (913 aa).

Residues 407 to 427 (YMHNYEMPPYSTGETGRVGSP) are disordered. The Mg(2+) site is built by Asp521 and Asp527. The region spanning 587 to 646 (PRIITTSVPVEKIGEVIGPKGKMINQIQEDTGAEIAIEDDGTVFISSEGGEAAEKAKAII) is the KH domain. One can recognise an S1 motif domain in the interval 658-730 (GETYNGKVVK…DRGKISLAIP (73 aa)). Residues 727 to 913 (LAIPGFEDQE…VRRDFDPFED (187 aa)) form a disordered region. Composition is skewed to basic and acidic residues over residues 742 to 789 (SRGD…RRSD), 797 to 865 (DRPR…DRRG), and 872 to 898 (RGSD…ERTE).

Belongs to the polyribonucleotide nucleotidyltransferase family. It depends on Mg(2+) as a cofactor.

The protein resides in the cytoplasm. The catalysed reaction is RNA(n+1) + phosphate = RNA(n) + a ribonucleoside 5'-diphosphate. Functionally, involved in mRNA degradation. Catalyzes the phosphorolysis of single-stranded polyribonucleotides processively in the 3'- to 5'-direction. This chain is Polyribonucleotide nucleotidyltransferase, found in Bifidobacterium longum (strain DJO10A).